The sequence spans 1012 residues: Structural polyprotein (1012 aa).

An a divalent metal cation-binding site is contributed by aspartate 30. The 243-residue stretch at 513 to 755 folds into the Peptidase S50 domain; that stretch reads ADKGYEVVAN…AGRQYHLAMA (243 aa). The active-site Nucleophile is serine 652. Residue lysine 692 is part of the active site. The disordered stretch occupies residues 970–1012; it reads MEMKHRNPRRAPPKPKPKPNAPSQRPPGRLGRWIRTVSDEDLE. Positions 975-986 are enriched in basic residues; sequence RNPRRAPPKPKP. The segment at 1003–1012 is interaction with VP1 protein; the sequence is IRTVSDEDLE.

Homotrimer. A central divalent metal stabilizes the VP2 trimer. Interacts with host ITGA4/ITGB1. In terms of assembly, homodimer. Interacts (via C-terminus) with VP1 in the cytoplasm. Interacts with VP2. Specific enzymatic cleavages yield mature proteins. The capsid assembly seems to be regulated by polyprotein processing. The protease VP4 cleaves itself off the polyprotein, thus releasing pre-VP2 and VP3 within the infected cell. During capsid assembly, the C-terminus of pre-VP2 is further processed by VP4, giving rise to VP2, the external capsid protein and three small peptides that all stay closely associated with the capsid.

It is found in the virion. It localises to the host cytoplasm. Capsid protein VP2 self assembles to form an icosahedral capsid with a T=13 symmetry, about 70 nm in diameter, and consisting of 260 VP2 trimers. The capsid encapsulates the genomic dsRNA. VP2 is also involved in attachment and entry into the host cell by interacting with host ITGA4/ITGB1. Functionally, the precursor of VP2 plays an important role in capsid assembly. First, pre-VP2 and VP2 oligomers assemble to form a procapsid. Then, the pre-VP2 intermediates may be processed into VP2 proteins by proteolytic cleavage mediated by VP4 to obtain the mature virion. The final capsid is composed of pentamers and hexamers but VP2 has a natural tendency to assemble into all-pentameric structures. Therefore pre-VP2 may be required to allow formation of the hexameric structures. Its function is as follows. Protease VP4 is a serine protease that cleaves the polyprotein into its final products. Pre-VP2 is first partially cleaved, and may be completely processed by VP4 upon capsid maturation. In terms of biological role, capsid protein VP3 plays a key role in virion assembly by providing a scaffold for the capsid made of VP2. May self-assemble to form a T=4-like icosahedral inner-capsid composed of at least 180 trimers. Plays a role in genomic RNA packaging by recruiting VP1 into the capsid and interacting with the dsRNA genome segments to form a ribonucleoprotein complex. Additionally, the interaction of the VP3 C-terminal tail with VP1 removes the inherent structural blockade of the polymerase active site. Thus, VP3 can also function as a transcriptional activator. Structural peptide 1 is a small peptide derived from pre-VP2 C-terminus. It destabilizes and perforates cell membranes, suggesting a role during entry. Functionally, structural peptide 2 is a small peptide derived from pVP2 C-terminus. It is not essential for the virus viability, but viral growth is affected when missing. Its function is as follows. Structural peptide 3 is a small peptide derived from pVP2 C-terminus. It is not essential for the virus viability, but viral growth is affected when missing. In terms of biological role, structural peptide 4 is a small peptide derived from pVP2 C-terminus. It is essential for the virus viability. This chain is Structural polyprotein, found in Avian infectious bursal disease virus (strain Australian 002-73) (IBDV).